A 518-amino-acid polypeptide reads, in one-letter code: Sensor protein kinase HptS (518 aa).

The next 2 helical transmembrane spans lie at 20-40 and 222-242; these read IFPV…IYIW and GITL…FGFI. Positions 297–513 constitute a Histidine kinase domain; it reads EQLIHSIEHT…LICYKIPLSR (217 aa). H325 carries the post-translational modification Phosphohistidine; by autocatalysis.

In terms of processing, autophosphorylated.

Its subcellular location is the cell membrane. It catalyses the reaction ATP + protein L-histidine = ADP + protein N-phospho-L-histidine.. Functionally, member of the two-component regulatory system HptS/HptR that regulates genes involved in hexose phosphate transport system in response to changes in extracellular phosphate sources. May act as a sensor protein kinase which is autophosphorylated at a histidine residue and transfers its phosphate group to the conserved aspartic acid residue in the regulatory domain of HptS. In turn, HptS antagonizes CcpA-dependent transcription of a subset of CcpA-regulated genes involved in antibiotic susceptibility. The sequence is that of Sensor protein kinase HptS (hptS) from Staphylococcus aureus (strain bovine RF122 / ET3-1).